A 127-amino-acid polypeptide reads, in one-letter code: Protein chibby homolog 1 (127 aa).

The interval 1-25 (MPLFGSIFSPKKTPPRKSASLSNLH) is disordered. Phosphoserine is present on residues Ser-9 and Ser-20. The interval 60–112 (VADSVISGGVDRRETQRLRKRNQQLEEENNLLRLKVDILLDMLSETTAESHLK) is minimal region for the interaction with PKD2. Positions 68–110 (GVDRRETQRLRKRNQQLEEENNLLRLKVDILLDMLSETTAESH) form a coiled coil. The interval 77-98 (LRKRNQQLEEENNLLRLKVDIL) is leucine-zipper; mediates homodimerization.

Belongs to the chibby family. In terms of assembly, homodimer. Homodimerization is essential for nuclear localization and interaction with KPNA4 but is dispensable for interaction with CTNNB1. Interacts with polycystin-2/PKD2 and GM130. Interacts with the C-terminal region of CTNNB1. Interacts (C-terminus) with TCIM (C-terminus), TCIM competes with CTNNB1 for the interaction with CBY1. Interacts with FAM92A; this interaction facilitates targeting of FAM92A to cilium basal body. Interacts with CIBAR2. Interacts with KPNA4.

It localises to the nucleus speckle. The protein resides in the cytoplasm. It is found in the cytoskeleton. Its subcellular location is the cilium basal body. The protein localises to the microtubule organizing center. It localises to the centrosome. The protein resides in the centriole. It is found in the golgi apparatus. Its subcellular location is the trans-Golgi network. The protein localises to the cell projection. It localises to the cilium. The protein resides in the flagellum. It is found in the nucleus. Its function is as follows. Inhibits the Wnt/Wingless pathway by binding to CTNNB1/beta-catenin and inhibiting beta-catenin-mediated transcriptional activation through competition with TCF/LEF transcription factors. Has also been shown to play a role in regulating the intracellular trafficking of polycystin-2/PKD2 and possibly of other intracellular proteins. Promotes adipocyte and cardiomyocyte differentiation. This is Protein chibby homolog 1 (Cby1) from Rattus norvegicus (Rat).